The primary structure comprises 156 residues: 6,7-dimethyl-8-ribityllumazine synthase (156 aa).

Residues phenylalanine 22, 57-59 (AVE), and 81-83 (SVI) contribute to the 5-amino-6-(D-ribitylamino)uracil site. 86–87 (GT) lines the (2S)-2-hydroxy-3-oxobutyl phosphate pocket. Histidine 89 functions as the Proton donor in the catalytic mechanism. Phenylalanine 114 is a 5-amino-6-(D-ribitylamino)uracil binding site. (2S)-2-hydroxy-3-oxobutyl phosphate is bound at residue arginine 128.

It belongs to the DMRL synthase family. Forms an icosahedral capsid composed of 60 subunits, arranged as a dodecamer of pentamers.

It catalyses the reaction (2S)-2-hydroxy-3-oxobutyl phosphate + 5-amino-6-(D-ribitylamino)uracil = 6,7-dimethyl-8-(1-D-ribityl)lumazine + phosphate + 2 H2O + H(+). It functions in the pathway cofactor biosynthesis; riboflavin biosynthesis; riboflavin from 2-hydroxy-3-oxobutyl phosphate and 5-amino-6-(D-ribitylamino)uracil: step 1/2. Catalyzes the formation of 6,7-dimethyl-8-ribityllumazine by condensation of 5-amino-6-(D-ribitylamino)uracil with 3,4-dihydroxy-2-butanone 4-phosphate. This is the penultimate step in the biosynthesis of riboflavin. This Vibrio vulnificus (strain CMCP6) protein is 6,7-dimethyl-8-ribityllumazine synthase.